Reading from the N-terminus, the 289-residue chain is Oxaloacetate decarboxylase (289 aa).

Residue Ser50 participates in substrate binding. Position 88 (Asp88) interacts with Mg(2+). 2 residues coordinate substrate: Arg159 and His235.

The protein belongs to the isocitrate lyase/PEP mutase superfamily. Oxaloacetate decarboxylase family. As to quaternary structure, homotetramer; dimer of dimers. Requires Mg(2+) as cofactor.

It carries out the reaction oxaloacetate + H(+) = pyruvate + CO2. Its function is as follows. Catalyzes the decarboxylation of oxaloacetate into pyruvate. Seems to play a role in maintaining cellular concentrations of bicarbonate and pyruvate. This Pseudomonas entomophila (strain L48) protein is Oxaloacetate decarboxylase.